The primary structure comprises 96 residues: (4S)-4-hydroxy-5-phosphonooxypentane-2,3-dione isomerase (96 aa).

Residues 2–91 enclose the ABM domain; it reads HVTLVEINVH…MTGPRTKKVF (90 aa).

Belongs to the LsrG family. Homodimer.

It is found in the cytoplasm. It carries out the reaction (2S)-2-hydroxy-3,4-dioxopentyl phosphate = 3-hydroxy-2,4-dioxopentyl phosphate. Its function is as follows. Involved in the degradation of phospho-AI-2, thereby terminating induction of the lsr operon and closing the AI-2 signaling cycle. Catalyzes the conversion of (4S)-4-hydroxy-5-phosphonooxypentane-2,3-dione (P-DPD) to 3-hydroxy-5-phosphonooxypentane-2,4-dione (P-HPD). In Salmonella typhimurium (strain LT2 / SGSC1412 / ATCC 700720), this protein is (4S)-4-hydroxy-5-phosphonooxypentane-2,3-dione isomerase.